A 176-amino-acid chain; its full sequence is Co-chaperone protein HscB (176 aa).

Residues 2–74 form the J domain; sequence DYFTLFGLPA…LMRAEYLLSL (73 aa).

The protein belongs to the HscB family. Interacts with HscA and stimulates its ATPase activity. Interacts with IscU.

In terms of biological role, co-chaperone involved in the maturation of iron-sulfur cluster-containing proteins. Seems to help targeting proteins to be folded toward HscA. The chain is Co-chaperone protein HscB from Escherichia coli O7:K1 (strain IAI39 / ExPEC).